The chain runs to 127 residues: Major sperm protein 2 (127 aa).

An N-acetylalanine modification is found at Ala-2. The 118-residue stretch at 9-126 (DIHTQPGSKI…RRKNLPIEYN (118 aa)) folds into the MSP domain.

Sperm.

The protein resides in the cell projection. It localises to the pseudopodium. It is found in the cytoplasm. The protein localises to the cytoskeleton. Central component in molecular interactions underlying sperm crawling. Forms an extensive filament system that extends from sperm villipoda, along the leading edge of the pseudopod. This is Major sperm protein 2 from Onchocerca volvulus.